We begin with the raw amino-acid sequence, 112 residues long: Iron-sulfur cluster insertion protein ErpA (112 aa).

3 residues coordinate iron-sulfur cluster: cysteine 40, cysteine 104, and cysteine 106.

Belongs to the HesB/IscA family. In terms of assembly, homodimer. Iron-sulfur cluster is required as a cofactor.

Required for insertion of 4Fe-4S clusters for at least IspG. This is Iron-sulfur cluster insertion protein ErpA from Pseudoalteromonas translucida (strain TAC 125).